Here is a 435-residue protein sequence, read N- to C-terminus: Glutamyl-tRNA reductase (435 aa).

Residues 49-52 (TCNR), Ser109, 114-116 (ETQ), and Gln120 contribute to the substrate site. Cys50 acts as the Nucleophile in catalysis. An NADP(+)-binding site is contributed by 189-194 (GAGEMS).

The protein belongs to the glutamyl-tRNA reductase family. In terms of assembly, homodimer.

The catalysed reaction is (S)-4-amino-5-oxopentanoate + tRNA(Glu) + NADP(+) = L-glutamyl-tRNA(Glu) + NADPH + H(+). The protein operates within porphyrin-containing compound metabolism; protoporphyrin-IX biosynthesis; 5-aminolevulinate from L-glutamyl-tRNA(Glu): step 1/2. Functionally, catalyzes the NADPH-dependent reduction of glutamyl-tRNA(Glu) to glutamate 1-semialdehyde (GSA). This chain is Glutamyl-tRNA reductase, found in Listeria monocytogenes serotype 4a (strain HCC23).